A 244-amino-acid polypeptide reads, in one-letter code: 7-cyano-7-deazaguanine synthase (244 aa).

14 to 24 (FSGGQDSATCV) serves as a coordination point for ATP. Cysteine 202, cysteine 217, cysteine 220, and cysteine 223 together coordinate Zn(2+).

The protein belongs to the QueC family. Requires Zn(2+) as cofactor.

The catalysed reaction is 7-carboxy-7-deazaguanine + NH4(+) + ATP = 7-cyano-7-deazaguanine + ADP + phosphate + H2O + H(+). Its pathway is purine metabolism; 7-cyano-7-deazaguanine biosynthesis. Its function is as follows. Catalyzes the ATP-dependent conversion of 7-carboxy-7-deazaguanine (CDG) to 7-cyano-7-deazaguanine (preQ(0)). This Burkholderia thailandensis (strain ATCC 700388 / DSM 13276 / CCUG 48851 / CIP 106301 / E264) protein is 7-cyano-7-deazaguanine synthase.